A 36-amino-acid chain; its full sequence is Lambda-hexatoxin-Hv1a (36 aa).

Disulfide bonds link C3–C17, C10–C22, C13–C14, and C16–C33.

The protein belongs to the neurotoxin 11 (kappa toxin) family. Expressed by the venom gland.

Its subcellular location is the secreted. Its function is as follows. This excitatory toxin inhibits insect calcium-activated potassium (KCa) channels (Slo-type). The sequence is that of Lambda-hexatoxin-Hv1a from Hadronyche versuta (Blue mountains funnel-web spider).